A 1802-amino-acid polypeptide reads, in one-letter code: Transposon Ty4-H Gag-Pol polyprotein (1802 aa).

A coiled-coil region spans residues 39–115 (RKVSIKDEQV…IQLLETNENN (77 aa)). Residues 381 to 501 (NNNLSPVQNE…KTKMVLSRKY (121 aa)) form a ty4 protease region. Asp-414 functions as the For protease activity; shared with dimeric partner in the catalytic mechanism. Residues 539–599 (AIKPTSSPGF…EPNEFWCQTC (61 aa)) are integrase-type zinc finger-like. One can recognise an Integrase catalytic domain in the interval 619 to 786 (TDHEPGSSWC…LPLKAISRQP (168 aa)). Residues Asp-630 and Asp-695 each contribute to the Mg(2+) site. The segment at 1223 to 1248 (KRKRKRHDKNNSLTSYELERDKKRSK) is disordered. The region spanning 1375 to 1510 (RNMFMKTLDI…DILGMDLVYN (136 aa)) is the Reverse transcriptase Ty1/copia-type domain. Residues Asp-1383, Asp-1462, Asp-1463, Asp-1644, Glu-1686, and Asp-1720 each coordinate Mg(2+). The RNase H Ty1/copia-type domain maps to 1644–1790 (DASVGSEYDA…KRFIQVLKNK (147 aa)).

In terms of assembly, the protease is a homodimer, whose active site consists of two apposed aspartic acid residues. In terms of processing, proteolytically processed into capsid protein (CA), Ty4 protease (PR), integrase (IN) and reverse transcriptase/ribonuclease H (RT) proteins. Initially, virus-like particles (VLPs) are composed of the structural unprocessed proteins Gag and Gag-Pol, and also contain the host initiator methionine tRNA (tRNA(i)-Met) which serves as a primer for minus-strand DNA synthesis, and a dimer of genomic Ty RNA. Processing of the polyproteins occurs within the particle and proceeds by an ordered pathway, called maturation. First, the protease (PR) is released by autocatalytic cleavage of the Gag-Pol polyprotein, and this cleavage is a prerequisite for subsequent processing at the remaining sites to release the mature structural and catalytic proteins. Maturation takes place prior to the RT reaction and is required to produce transposition-competent VLPs.

It is found in the cytoplasm. The protein localises to the nucleus. The enzyme catalyses DNA(n) + a 2'-deoxyribonucleoside 5'-triphosphate = DNA(n+1) + diphosphate. It catalyses the reaction Endonucleolytic cleavage to 5'-phosphomonoester.. In terms of biological role, capsid protein (CA) is the structural component of the virus-like particle (VLP), forming the shell that encapsulates the retrotransposons dimeric RNA genome. Its function is as follows. The aspartyl protease (PR) mediates the proteolytic cleavages of the Gag and Gag-Pol polyproteins after assembly of the VLP. Reverse transcriptase/ribonuclease H (RT) is a multifunctional enzyme that catalyzes the conversion of the retro-elements RNA genome into dsDNA within the VLP. The enzyme displays a DNA polymerase activity that can copy either DNA or RNA templates, and a ribonuclease H (RNase H) activity that cleaves the RNA strand of RNA-DNA heteroduplexes during plus-strand synthesis and hydrolyzes RNA primers. The conversion leads to a linear dsDNA copy of the retrotransposon that includes long terminal repeats (LTRs) at both ends. Functionally, integrase (IN) targets the VLP to the nucleus, where a subparticle preintegration complex (PIC) containing at least integrase and the newly synthesized dsDNA copy of the retrotransposon must transit the nuclear membrane. Once in the nucleus, integrase performs the integration of the dsDNA into the host genome. In Saccharomyces cerevisiae (strain ATCC 204508 / S288c) (Baker's yeast), this protein is Transposon Ty4-H Gag-Pol polyprotein (TY4B-H).